We begin with the raw amino-acid sequence, 312 residues long: Terpene synthase 8 (312 aa).

The short motif at 96–101 is the DDxx(x)D/E motif element; sequence DDYIYE. The NDxxSxxxD/E motif signature appears at 224-232; the sequence is NDCGSFKME.

Belongs to the terpene synthase family.

It catalyses the reaction (2E,6E)-farnesyl diphosphate + H2O = discoidol + diphosphate. It participates in sesquiterpene biosynthesis. In terms of biological role, terpene synthase; part of the gene cluster that mediates the biosynthesis of the trisnorsesquiterpene discodiene which has a function during later stages of multicellular development, during the transition from fingers to Mexican hats. The terpene synthase tps8 converts its substrate farnesyl diphosphate (FDP) into the bicyclic sesquiterpene alcohol discoidol. The cytochrome P450 monooxygenase cyp521A1 then catalyzes the oxidative degradation of discoidol to form the trisnorsesquiterpene discodiene. The chain is Terpene synthase 8 from Dictyostelium discoideum (Social amoeba).